The sequence spans 526 residues: Peptide chain release factor 3 (526 aa).

Residues 9 to 277 (DKRRTFAIIS…GIVEWAPKPL (269 aa)) form the tr-type G domain. GTP is bound by residues 18–25 (SHPDAGKT), 86–90 (DTPGH), and 140–143 (NKCD).

The protein belongs to the TRAFAC class translation factor GTPase superfamily. Classic translation factor GTPase family. PrfC subfamily.

It is found in the cytoplasm. Its function is as follows. Increases the formation of ribosomal termination complexes and stimulates activities of RF-1 and RF-2. It binds guanine nucleotides and has strong preference for UGA stop codons. It may interact directly with the ribosome. The stimulation of RF-1 and RF-2 is significantly reduced by GTP and GDP, but not by GMP. This is Peptide chain release factor 3 from Shewanella frigidimarina (strain NCIMB 400).